The chain runs to 71 residues: Small ribosomal subunit protein bS21 (71 aa).

Positions 49–59 (AAAAVKRHAKK) are enriched in basic residues. The segment at 49–71 (AAAAVKRHAKKVQREQRRSVRLY) is disordered. A compositionally biased stretch (basic and acidic residues) spans 60 to 71 (VQREQRRSVRLY).

The protein belongs to the bacterial ribosomal protein bS21 family.

This is Small ribosomal subunit protein bS21 from Stutzerimonas stutzeri (strain A1501) (Pseudomonas stutzeri).